Here is a 505-residue protein sequence, read N- to C-terminus: UDP-N-acetylmuramate--L-alanine ligase (505 aa).

Residue Gly164–Thr170 participates in ATP binding.

The protein belongs to the MurCDEF family.

The protein resides in the cytoplasm. The enzyme catalyses UDP-N-acetyl-alpha-D-muramate + L-alanine + ATP = UDP-N-acetyl-alpha-D-muramoyl-L-alanine + ADP + phosphate + H(+). Its pathway is cell wall biogenesis; peptidoglycan biosynthesis. In terms of biological role, cell wall formation. This Synechocystis sp. (strain ATCC 27184 / PCC 6803 / Kazusa) protein is UDP-N-acetylmuramate--L-alanine ligase.